Reading from the N-terminus, the 393-residue chain is Putative bacilysin exporter BacE (393 aa).

10 helical membrane passes run 11–31 (LLFGQALSFMGDYCVLPALLI), 43–63 (SGVIAVRSIPMVFQPFLGVLV), 69–89 (VKIMLWTDVIRGVIFLGLTFL), 92–112 (GEYPLLFLALLFVSYGSGVFF), 133–155 (LFAKATTISIIVGAAAGGLFLLG), 160–177 (LAVAFNGVTYLVSAFFIS), 215–235 (MFTMITMALLWGVVYSYFPIV), 244–264 (IGNFLLTFCIGFGGFIGAALV), 287–307 (ALFLFTPIFAVSVIAAILFFI), and 353–373 (IVDAAVIMAFIVLLVSGLFLH).

It belongs to the major facilitator superfamily.

The protein resides in the cell membrane. Part of the bacilysin biosynthesis operon. May be involved in self-resistance to bacilysin by permitting efflux of this antibiotic. The sequence is that of Putative bacilysin exporter BacE (bacE) from Bacillus amyloliquefaciens (Bacillus velezensis).